A 423-amino-acid chain; its full sequence is Osteomodulin (423 aa).

Positions 1–20 are cleaved as a signal peptide; sequence MGCLRPIYVLFFCFVVRVYG. Sulfotyrosine is present on residues Y22, Y25, Y31, Y39, Y51, and Y77. One can recognise an LRRNT domain in the interval 53–91; that stretch reads APFYQNILGCAKECFCPTNFPTSMYCDNRKLKTIPDIPM. LRR repeat units follow at residues 92–113, 116–129, 142–164, 165–184, 187–207, 213–233, 234–255, 258–279, 281–294, 301–322, and 331–353; these read HIQQ…SFIN, HLKE…KIKS, NLQQ…PKSL, ERLL…AMDG, NVTM…KGKI, KLMQ…GLPL, SLMY…YFQK, KLHA…IFNL, NLIE…KLKQ, NLEH…MMCP, and HLTY…IFFC. 2 N-linked (GlcNAc...) asparagine glycosylation sites follow: N113 and N121. An N-linked (GlcNAc...) asparagine glycan is attached at N187. 2 N-linked (GlcNAc...) asparagine glycosylation sites follow: N242 and N278. A glycan (N-linked (GlcNAc...) asparagine) is linked at N316. Cysteines 321 and 353 form a disulfide. Residues 383–408 are disordered; that stretch reads YQDEEEEEEDDSQDHTLEGQEETEEH. Positions 385–394 are enriched in acidic residues; it reads DEEEEEEDDS. Sulfotyrosine is present on residues Y413 and Y414.

Belongs to the small leucine-rich proteoglycan (SLRP) family. SLRP class II subfamily. In terms of assembly, binds the alpha(V)beta(3)-integrin. In terms of processing, glycosylated; contains keratan sulfate. As to expression, osteoblast and odontoblast. Expressed in femoral bone and calvaria tissues. Detected in femoral head, rib, tendon and bone marrow.

The protein localises to the secreted. Its subcellular location is the extracellular space. It localises to the extracellular matrix. May be implicated in biomineralization processes. Has a function in binding of osteoblasts via the alpha(V)beta(3)-integrin. The chain is Osteomodulin (Omd) from Rattus norvegicus (Rat).